Here is a 225-residue protein sequence, read N- to C-terminus: Cytidylate kinase (225 aa).

An ATP-binding site is contributed by 11–19 (GPAAAGKST).

This sequence belongs to the cytidylate kinase family. Type 1 subfamily.

It is found in the cytoplasm. The enzyme catalyses CMP + ATP = CDP + ADP. It catalyses the reaction dCMP + ATP = dCDP + ADP. The chain is Cytidylate kinase from Bacillus cereus (strain ATCC 10987 / NRS 248).